Here is a 313-residue protein sequence, read N- to C-terminus: Porphobilinogen deaminase (313 aa).

S-(dipyrrolylmethanemethyl)cysteine is present on Cys242.

This sequence belongs to the HMBS family. As to quaternary structure, monomer. Dipyrromethane serves as cofactor.

It carries out the reaction 4 porphobilinogen + H2O = hydroxymethylbilane + 4 NH4(+). The protein operates within porphyrin-containing compound metabolism; protoporphyrin-IX biosynthesis; coproporphyrinogen-III from 5-aminolevulinate: step 2/4. Tetrapolymerization of the monopyrrole PBG into the hydroxymethylbilane pre-uroporphyrinogen in several discrete steps. The protein is Porphobilinogen deaminase of Klebsiella pneumoniae subsp. pneumoniae (strain ATCC 700721 / MGH 78578).